The sequence spans 238 residues: Ribonuclease PH (238 aa).

Residues Arg86 and 124–126 each bind phosphate; that span reads GTR.

Belongs to the RNase PH family. In terms of assembly, homohexameric ring arranged as a trimer of dimers.

The catalysed reaction is tRNA(n+1) + phosphate = tRNA(n) + a ribonucleoside 5'-diphosphate. Functionally, phosphorolytic 3'-5' exoribonuclease that plays an important role in tRNA 3'-end maturation. Removes nucleotide residues following the 3'-CCA terminus of tRNAs; can also add nucleotides to the ends of RNA molecules by using nucleoside diphosphates as substrates, but this may not be physiologically important. Probably plays a role in initiation of 16S rRNA degradation (leading to ribosome degradation) during starvation. This chain is Ribonuclease PH, found in Geotalea daltonii (strain DSM 22248 / JCM 15807 / FRC-32) (Geobacter daltonii).